The primary structure comprises 127 residues: Large ribosomal subunit protein bL21 (127 aa).

This sequence belongs to the bacterial ribosomal protein bL21 family. Part of the 50S ribosomal subunit. Contacts protein L20.

Its function is as follows. This protein binds to 23S rRNA in the presence of protein L20. In Synechococcus sp. (strain ATCC 27144 / PCC 6301 / SAUG 1402/1) (Anacystis nidulans), this protein is Large ribosomal subunit protein bL21.